A 70-amino-acid polypeptide reads, in one-letter code: DNA-directed RNA polymerases I, II, and III subunit rpabc5 (70 aa).

Residues Cys7, Cys10, Cys44, and Cys45 each contribute to the Zn(2+) site.

It belongs to the archaeal Rpo10/eukaryotic RPB10 RNA polymerase subunit family. In terms of assembly, component of the RNA polymerase I (Pol I), RNA polymerase II (Pol II) and RNA polymerase III (Pol III) complexes.

Its subcellular location is the nucleus. In terms of biological role, DNA-dependent RNA polymerase catalyzes the transcription of DNA into RNA using the four ribonucleoside triphosphates as substrates. Common component of RNA polymerases I, II and III which synthesize ribosomal RNA precursors, mRNA precursors and many functional non-coding RNAs, and a small RNAs, such as 5S rRNA and tRNAs, respectively. Pol II is the central component of the basal RNA polymerase II transcription machinery. Pols are composed of mobile elements that move relative to each other. In Pol II, RBP10 is part of the core element with the central large cleft. This Dictyostelium discoideum (Social amoeba) protein is DNA-directed RNA polymerases I, II, and III subunit rpabc5 (polr2l).